The sequence spans 200 residues: NAD(P)H dehydrogenase (quinone) (200 aa).

The Flavodoxin-like domain occupies 4-191 (VLVLYYSSYG…DIARYQGKHV (188 aa)). Residues 10-15 (SSYGHV) and 79-81 (TRF) each bind FMN. NAD(+) is bound at residue tyrosine 12. Tryptophan 99 is a substrate binding site. Residues 114 to 120 (STGTQHG) and histidine 135 each bind FMN.

This sequence belongs to the WrbA family. FMN is required as a cofactor.

The enzyme catalyses a quinone + NADH + H(+) = a quinol + NAD(+). It carries out the reaction a quinone + NADPH + H(+) = a quinol + NADP(+). In Burkholderia ambifaria (strain MC40-6), this protein is NAD(P)H dehydrogenase (quinone).